A 162-amino-acid chain; its full sequence is Phosphopantetheine adenylyltransferase (162 aa).

Substrate is bound at residue Ser-11. ATP-binding positions include 11 to 12 (SF) and His-19. Substrate-binding residues include Lys-43, Leu-75, and Arg-89. ATP is bound by residues 90 to 92 (GLR), Glu-100, and 125 to 131 (YSYLSSS).

It belongs to the bacterial CoaD family. Homohexamer. The cofactor is Mg(2+).

The protein localises to the cytoplasm. It catalyses the reaction (R)-4'-phosphopantetheine + ATP + H(+) = 3'-dephospho-CoA + diphosphate. The protein operates within cofactor biosynthesis; coenzyme A biosynthesis; CoA from (R)-pantothenate: step 4/5. Reversibly transfers an adenylyl group from ATP to 4'-phosphopantetheine, yielding dephospho-CoA (dPCoA) and pyrophosphate. The polypeptide is Phosphopantetheine adenylyltransferase (Geotalea uraniireducens (strain Rf4) (Geobacter uraniireducens)).